A 223-amino-acid chain; its full sequence is Urease accessory protein UreF (223 aa).

This sequence belongs to the UreF family. As to quaternary structure, ureD, UreF and UreG form a complex that acts as a GTP-hydrolysis-dependent molecular chaperone, activating the urease apoprotein by helping to assemble the nickel containing metallocenter of UreC. The UreE protein probably delivers the nickel.

The protein localises to the cytoplasm. Its function is as follows. Required for maturation of urease via the functional incorporation of the urease nickel metallocenter. The sequence is that of Urease accessory protein UreF from Rhizobium leguminosarum bv. viciae.